Reading from the N-terminus, the 205-residue chain is High frequency lysogenization protein HflD homolog (205 aa).

The protein belongs to the HflD family.

It is found in the cytoplasm. The protein localises to the cell inner membrane. The polypeptide is High frequency lysogenization protein HflD homolog (Shewanella sp. (strain W3-18-1)).